The sequence spans 203 residues: Peptide deformylase (203 aa).

The Fe cation site is built by Cys130 and His173. The active site involves Glu174. Residue His177 participates in Fe cation binding.

The protein belongs to the polypeptide deformylase family. Fe(2+) is required as a cofactor.

It carries out the reaction N-terminal N-formyl-L-methionyl-[peptide] + H2O = N-terminal L-methionyl-[peptide] + formate. Functionally, removes the formyl group from the N-terminal Met of newly synthesized proteins. Requires at least a dipeptide for an efficient rate of reaction. N-terminal L-methionine is a prerequisite for activity but the enzyme has broad specificity at other positions. The polypeptide is Peptide deformylase (Streptococcus pneumoniae serotype 4 (strain ATCC BAA-334 / TIGR4)).